The chain runs to 375 residues: Dual specificity protein phosphatase 4 (375 aa).

Residues 25 to 143 (SGGRCLLLDC…FASEYPEFCA (119 aa)) form the Rhodanese domain. Residues 176–317 (GPVEILPFLY…LLQFESQVLA (142 aa)) form the Tyrosine-protein phosphatase domain. Cys-261 acts as the Phosphocysteine intermediate in catalysis.

This sequence belongs to the protein-tyrosine phosphatase family. Non-receptor class dual specificity subfamily.

The protein localises to the nucleus. The enzyme catalyses O-phospho-L-tyrosyl-[protein] + H2O = L-tyrosyl-[protein] + phosphate. The catalysed reaction is O-phospho-L-seryl-[protein] + H2O = L-seryl-[protein] + phosphate. It carries out the reaction O-phospho-L-threonyl-[protein] + H2O = L-threonyl-[protein] + phosphate. Regulates mitogenic signal transduction by dephosphorylating both Thr and Tyr residues on MAP kinases ERK1 and ERK2. The polypeptide is Dual specificity protein phosphatase 4 (DUSP4) (Gallus gallus (Chicken)).